The following is a 280-amino-acid chain: Ribonuclease Z (280 aa).

Positions 61, 63, 65, 66, 153, 176, and 240 each coordinate Zn(2+). The active-site Proton acceptor is the Asp-65.

It belongs to the RNase Z family. In terms of assembly, homodimer. Requires Zn(2+) as cofactor.

It catalyses the reaction Endonucleolytic cleavage of RNA, removing extra 3' nucleotides from tRNA precursor, generating 3' termini of tRNAs. A 3'-hydroxy group is left at the tRNA terminus and a 5'-phosphoryl group is left at the trailer molecule.. In terms of biological role, zinc phosphodiesterase, which displays some tRNA 3'-processing endonuclease activity. Probably involved in tRNA maturation, by removing a 3'-trailer from precursor tRNA. The polypeptide is Ribonuclease Z (Mycobacterium avium (strain 104)).